The following is a 912-amino-acid chain: Alpha-actinin-4 (912 aa).

Positions 1–267 are actin-binding; sequence MVDYHAANQA…IMTYVSSFYH (267 aa). An interaction with VCL region spans residues 12-27; it reads QYGPNSGGGNGAGGGG. A disordered region spans residues 12–31; the sequence is QYGPNSGGGNGAGGGGSMGD. Gly residues predominate over residues 16–29; it reads NSGGGNGAGGGGSM. Phosphotyrosine is present on Y32. Residues 41–62 are interaction with VCL; that stretch reads RDLLLDPAWEKQQRKTFTAWCN. Calponin-homology (CH) domains follow at residues 51–155 and 164–270; these read KQQR…LRFA and TSAK…HAFS. The LXXLL motif signature appears at 85 to 89; it reads LMLLL. The interval 109–127 is interaction with VCL; that stretch reads KINNVNKALDFIASKGVKL. K115 is modified (N6-acetyllysine). The polyphosphoinositide (PIP2)-binding stretch occupies residues 178-193; that stretch reads TAPYKNVNVQNFHISW. K215 is subject to N6-acetyllysine. T250 is subject to Phosphothreonine. Spectrin repeat units lie at residues 294–404, 414–519, 529–640, and 650–753; these read HLME…WLLN, HLAE…ALEK, QLHL…ALLE, and HLRR…EVEN. Residues K593 and K626 each carry the N6-acetyllysine modification. A Phosphoserine modification is found at S697. The interval 737-912 is mediates interaction with MICALL2; the sequence is WEQLLTTIAR…STALYGESDL (176 aa). EF-hand domains lie at 766-801 and 807-842; these read EQMQ…LGYD and QGDA…ETTD. D779 lines the Ca(2+) pocket. An N6-acetyllysine modification is found at K780. Ca(2+) contacts are provided by D781 and E790. K860 carries the N6-acetyllysine modification. Residue S910 is modified to Phosphoserine.

It belongs to the alpha-actinin family. Homodimer; antiparallel. Interacts with MAGI1. Interacts with PDLIM2. Identified in a complex with CASK, IQGAP1, MAGI2, NPHS1, SPTAN1 and SPTBN1. Identified in a IGF2BP1-dependent mRNP granule complex containing untranslated mRNAs. Component of the CART complex, at least composed of ACTN4, HGS/HRS, MYO5B and TRIM3. Binds TRIM3 at the N-terminus. Interacts with MICALL2 (preferentially in opened conformation); stimulated by RAB13 activation. Interacts with PPARG and RARA. Binds to VCL; this interaction triggers VCL conformational changes. Interacts with SEPTIN14. Interacts with IGSF8.

The protein resides in the nucleus. Its subcellular location is the cytoplasm. The protein localises to the cell junction. It is found in the cytoskeleton. It localises to the stress fiber. The protein resides in the perinuclear region. Functionally, F-actin cross-linking protein which is thought to anchor actin to a variety of intracellular structures. This is a bundling protein. Probably involved in vesicular trafficking via its association with the CART complex. The CART complex is necessary for efficient transferrin receptor recycling but not for EGFR degradation. Involved in tight junction assembly in epithelial cells probably through interaction with MICALL2. Links MICALL2 to the actin cytoskeleton and recruits it to the tight junctions. May also function as a transcriptional coactivator, stimulating transcription mediated by the nuclear hormone receptors PPARG and RARA. Association with IGSF8 regulates the immune synapse formation and is required for efficient T-cell activation. The chain is Alpha-actinin-4 from Mus musculus (Mouse).